The following is a 93-amino-acid chain: Auxin-induced protein 10A5 (93 aa).

This sequence belongs to the ARG7 family.

This chain is Auxin-induced protein 10A5, found in Glycine max (Soybean).